A 374-amino-acid chain; its full sequence is Chaperone protein DnaJ (374 aa).

Positions 5 to 70 (DFYEILGVSK…EKRSAYDRMG (66 aa)) constitute a J domain. A CR-type zinc finger spans residues 133–211 (GCKKEISFTA…CHGNGVKDKS (79 aa)). Residues cysteine 146, cysteine 149, cysteine 163, cysteine 166, cysteine 185, cysteine 188, cysteine 199, and cysteine 202 each coordinate Zn(2+). 4 CXXCXGXG motif repeats span residues 146–153 (CDTCDGKG), 163–170 (CQTCHGQG), 185–192 (CPHCGGTG), and 199–206 (CSDCHGNG).

It belongs to the DnaJ family. Homodimer. Zn(2+) serves as cofactor.

The protein resides in the cytoplasm. In terms of biological role, participates actively in the response to hyperosmotic and heat shock by preventing the aggregation of stress-denatured proteins and by disaggregating proteins, also in an autonomous, DnaK-independent fashion. Unfolded proteins bind initially to DnaJ; upon interaction with the DnaJ-bound protein, DnaK hydrolyzes its bound ATP, resulting in the formation of a stable complex. GrpE releases ADP from DnaK; ATP binding to DnaK triggers the release of the substrate protein, thus completing the reaction cycle. Several rounds of ATP-dependent interactions between DnaJ, DnaK and GrpE are required for fully efficient folding. Also involved, together with DnaK and GrpE, in the DNA replication of plasmids through activation of initiation proteins. The chain is Chaperone protein DnaJ from Psychrobacter arcticus (strain DSM 17307 / VKM B-2377 / 273-4).